The following is a 199-amino-acid chain: ATP-dependent Clp protease proteolytic subunit (199 aa).

Catalysis depends on S97, which acts as the Nucleophile. Residue H122 is part of the active site.

It belongs to the peptidase S14 family. As to quaternary structure, fourteen ClpP subunits assemble into 2 heptameric rings which stack back to back to give a disk-like structure with a central cavity, resembling the structure of eukaryotic proteasomes.

It localises to the cytoplasm. It catalyses the reaction Hydrolysis of proteins to small peptides in the presence of ATP and magnesium. alpha-casein is the usual test substrate. In the absence of ATP, only oligopeptides shorter than five residues are hydrolyzed (such as succinyl-Leu-Tyr-|-NHMec, and Leu-Tyr-Leu-|-Tyr-Trp, in which cleavage of the -Tyr-|-Leu- and -Tyr-|-Trp bonds also occurs).. Functionally, cleaves peptides in various proteins in a process that requires ATP hydrolysis. Has a chymotrypsin-like activity. Plays a major role in the degradation of misfolded proteins. This is ATP-dependent Clp protease proteolytic subunit from Citrifermentans bemidjiense (strain ATCC BAA-1014 / DSM 16622 / JCM 12645 / Bem) (Geobacter bemidjiensis).